Here is a 78-residue protein sequence, read N- to C-terminus: Small ribosomal subunit protein bS20 (78 aa).

This sequence belongs to the bacterial ribosomal protein bS20 family.

In terms of biological role, binds directly to 16S ribosomal RNA. This Streptococcus sanguinis (strain SK36) protein is Small ribosomal subunit protein bS20.